We begin with the raw amino-acid sequence, 351 residues long: uncharacterized protein (351 aa).

An N-terminal signal peptide occupies residues 1 to 27 (MKNKKRVLIASSLSCAILLLSAATTQA). Positions 29 to 71 (SAHKDSQDQNKKEHVDKSQQKDKRNVTNKDKNSTVPDDIGKNG) are disordered. Basic and acidic residues predominate over residues 30-60 (AHKDSQDQNKKEHVDKSQQKDKRNVTNKDKN).

This sequence belongs to the aerolysin family.

This is an uncharacterized protein from Staphylococcus aureus (strain Mu50 / ATCC 700699).